The following is a 66-amino-acid chain: Phylloseptin-Az3 (66 aa).

The signal sequence occupies residues 1–22; the sequence is MAFLKKSLFLVLFLGLVSLSIC. A propeptide spanning residues 23 to 44 is cleaved from the precursor; sequence EEEKRETEEEEYNQEDDDKSEE. The residue at position 65 (phenylalanine 65) is a Phenylalanine amide.

In terms of tissue distribution, expressed by the skin glands.

Its subcellular location is the secreted. Functionally, has antimicrobial activity. The sequence is that of Phylloseptin-Az3 from Pithecopus azureus (Orange-legged monkey tree frog).